We begin with the raw amino-acid sequence, 254 residues long: uncharacterized protein (254 aa).

Cys71 serves as the catalytic Acyl-thioester intermediate. Residues His110 and Asp125 contribute to the active site.

It belongs to the arylamine N-acetyltransferase family.

This is an uncharacterized protein from Bacillus subtilis (strain 168).